A 451-amino-acid polypeptide reads, in one-letter code: Glycine--tRNA ligase (451 aa).

Substrate contacts are provided by Arg-99 and Glu-168. Residues 200-202 (RNE), 210-215 (FRTREF), 284-285 (EL), and 328-331 (GLDR) contribute to the ATP site. 215–219 (FEQME) is a substrate binding site. 324-328 (EPSVG) provides a ligand contact to substrate.

Belongs to the class-II aminoacyl-tRNA synthetase family. Homodimer.

It is found in the cytoplasm. The catalysed reaction is tRNA(Gly) + glycine + ATP = glycyl-tRNA(Gly) + AMP + diphosphate. In terms of biological role, catalyzes the attachment of glycine to tRNA(Gly). This Mycoplasmopsis synoviae (strain 53) (Mycoplasma synoviae) protein is Glycine--tRNA ligase.